The sequence spans 215 residues: Nascent polypeptide-associated complex subunit alpha (215 aa).

Residues methionine 1 to serine 81 form a disordered region. The segment covering valine 9–glutamate 28 has biased composition (polar residues). A compositionally biased stretch (acidic residues) spans serine 29–aspartate 42. The residue at position 43 (serine 43) is a Phosphoserine; by ILK1. Residues threonine 44 to alanine 57 show a composition bias toward low complexity. The segment at glutamine 69–methionine 80 is required for DNA-binding. The region spanning serine 70–alanine 135 is the NAC-A/B domain. An RNA/DNA-binding region spans residues arginine 93–lysine 108. The residue at position 132 (serine 132) is a Phosphoserine. Lysine 142 is modified (N6-acetyllysine; alternate). Lysine 142 is covalently cross-linked (Glycyl lysine isopeptide (Lys-Gly) (interchain with G-Cter in SUMO2); alternate). At threonine 159 the chain carries Phosphothreonine; by GSK3-beta. At threonine 161 the chain carries Phosphothreonine. Phosphoserine is present on residues serine 166, serine 186, serine 191, and serine 203. Positions valine 176–leucine 213 constitute a UBA domain.

It belongs to the NAC-alpha family. In terms of assembly, interacts with TBP and JUN. Part of the nascent polypeptide-associated complex (NAC), which is a heterodimer of NACA and BTF3 (via NAC-A/B domains). NAC associates with ribosomes through the BTF3/NACB subunit and contacts the ribosomal protein L23, which is positioned near the exiting site. Both subunits can contact nascent polypeptide chains. NACA may also form homodimers, and only this form binds DNA. Phosphorylation of Thr-159 by GSK3B may promote proteasome mediated degradation. Phosphorylation of Ser-43 by ILK during cell adhesion may promote nuclear localization. Ubiquitously expressed.

It is found in the cytoplasm. The protein resides in the nucleus. In terms of biological role, prevents inappropriate targeting of non-secretory polypeptides to the endoplasmic reticulum (ER). Binds to nascent polypeptide chains as they emerge from the ribosome and blocks their interaction with the signal recognition particle (SRP), which normally targets nascent secretory peptides to the ER. Also reduces the inherent affinity of ribosomes for protein translocation sites in the ER membrane (M sites). May act as a specific coactivator for JUN, binding to DNA and stabilizing the interaction of JUN homodimers with target gene promoters. This chain is Nascent polypeptide-associated complex subunit alpha (NACA), found in Homo sapiens (Human).